Here is a 359-residue protein sequence, read N- to C-terminus: Fructose-bisphosphate aldolase (359 aa).

A D-glyceraldehyde 3-phosphate-binding site is contributed by S50. D83 serves as the catalytic Proton donor. Residues H84, D105, E142, and H198 each contribute to the Zn(2+) site. Residue G199 coordinates dihydroxyacetone phosphate. H232 serves as a coordination point for Zn(2+). Residues 233–235 and 275–278 each bind dihydroxyacetone phosphate; these read GSS and NIDT.

It belongs to the class II fructose-bisphosphate aldolase family. As to quaternary structure, homodimer. Requires Zn(2+) as cofactor.

It carries out the reaction beta-D-fructose 1,6-bisphosphate = D-glyceraldehyde 3-phosphate + dihydroxyacetone phosphate. Its pathway is carbohydrate biosynthesis; Calvin cycle. It functions in the pathway carbohydrate degradation; glycolysis; D-glyceraldehyde 3-phosphate and glycerone phosphate from D-glucose: step 4/4. Functionally, catalyzes the aldol condensation of dihydroxyacetone phosphate (DHAP or glycerone-phosphate) with glyceraldehyde 3-phosphate (G3P) to form fructose 1,6-bisphosphate (FBP) in gluconeogenesis and the reverse reaction in glycolysis. This Sinorhizobium medicae (strain WSM419) (Ensifer medicae) protein is Fructose-bisphosphate aldolase (cbbA).